The primary structure comprises 56 residues: uncharacterized protein (56 aa).

This is an uncharacterized protein from Escherichia coli (Bacteriophage T4).